A 129-amino-acid polypeptide reads, in one-letter code: Small ribosomal subunit protein uS11 (129 aa).

This sequence belongs to the universal ribosomal protein uS11 family. As to quaternary structure, part of the 30S ribosomal subunit. Interacts with proteins S7 and S18. Binds to IF-3.

In terms of biological role, located on the platform of the 30S subunit, it bridges several disparate RNA helices of the 16S rRNA. Forms part of the Shine-Dalgarno cleft in the 70S ribosome. The sequence is that of Small ribosomal subunit protein uS11 from Hyphomonas neptunium (strain ATCC 15444).